A 173-amino-acid polypeptide reads, in one-letter code: Lipoprotein signal peptidase (173 aa).

3 consecutive transmembrane segments (helical) span residues 9–29 (LPFLLTAIVIVVDQVTKILVV), 37–57 (VIPVIGDLVNLRFVYNTGAAF), and 70–90 (ILLVFLPFLLLIALTGAYLKS). Residues D124 and D146 contribute to the active site. Residues 142-162 (FNAADSFIVCCGIGLGVNLIL) traverse the membrane as a helical segment.

Belongs to the peptidase A8 family.

It is found in the cell inner membrane. The catalysed reaction is Release of signal peptides from bacterial membrane prolipoproteins. Hydrolyzes -Xaa-Yaa-Zaa-|-(S,diacylglyceryl)Cys-, in which Xaa is hydrophobic (preferably Leu), and Yaa (Ala or Ser) and Zaa (Gly or Ala) have small, neutral side chains.. It functions in the pathway protein modification; lipoprotein biosynthesis (signal peptide cleavage). Functionally, this protein specifically catalyzes the removal of signal peptides from prolipoproteins. This is Lipoprotein signal peptidase from Treponema denticola (strain ATCC 35405 / DSM 14222 / CIP 103919 / JCM 8153 / KCTC 15104).